The primary structure comprises 108 residues: DNA-binding protein HBbu (108 aa).

This sequence belongs to the bacterial histone-like protein family.

Histone-like DNA-binding protein which is capable of wrapping DNA to stabilize it, and thus to prevent its denaturation under extreme environmental conditions. The polypeptide is DNA-binding protein HBbu (hbb) (Borrelia parkeri).